The primary structure comprises 499 residues: NAD(P)H-quinone oxidoreductase chain 4, chloroplastic (499 aa).

Transmembrane regions (helical) follow at residues 4–24 (LPWLTIIVILPISAGLLIPLF), 31–51 (MIRWYTLGICLLDLLLMTYIF), 87–107 (IGLILLTGFVTTLATLAAWPV), 113–130 (LLHFLMLAMYSGQLGLFA), 134–154 (ILLFFLMWELELIPVYLLLSM), 167–187 (FLLYTAGGSIFILMGALSMGL), 211–231 (ILLYLGFLIAYAIKLPIFPLH), 242–262 (HYSTCMLLAGVLLKMGGYGLI), 274–294 (SLFSPWLIIIGAVQIIYAALT), 305–325 (IAYSSISHMGFVIIGIGSMTY), 330–350 (GAILQMISHGLIGAALFFLVG), 386–406 (LALPGMSGFVAEFMIFLGVIT), 416–436 (IIITAIAAIGMILTPIYLLSM), and 462–482 (LFILICLFLPIIGIGLYPDLV).

Belongs to the complex I subunit 4 family.

It is found in the plastid. The protein resides in the chloroplast thylakoid membrane. The enzyme catalyses a plastoquinone + NADH + (n+1) H(+)(in) = a plastoquinol + NAD(+) + n H(+)(out). It carries out the reaction a plastoquinone + NADPH + (n+1) H(+)(in) = a plastoquinol + NADP(+) + n H(+)(out). The sequence is that of NAD(P)H-quinone oxidoreductase chain 4, chloroplastic from Cryptomeria japonica (Japanese cedar).